Consider the following 343-residue polypeptide: Protein RecA (343 aa).

Residue 66 to 73 coordinates ATP; it reads GPESSGKT.

The protein belongs to the RecA family.

The protein resides in the cytoplasm. Its function is as follows. Can catalyze the hydrolysis of ATP in the presence of single-stranded DNA, the ATP-dependent uptake of single-stranded DNA by duplex DNA, and the ATP-dependent hybridization of homologous single-stranded DNAs. It interacts with LexA causing its activation and leading to its autocatalytic cleavage. The chain is Protein RecA from Rickettsia bellii (strain RML369-C).